A 424-amino-acid polypeptide reads, in one-letter code: UPF0229 protein Avin_46880 (424 aa).

Positions 57–108 (RDIDEPVLHHGRGGKQTIVHPGNKEFTAGERIPRPSGGGGGGSGSGKASNSG) are disordered. The span at 92-101 (SGGGGGGSGS) shows a compositional bias: gly residues.

It belongs to the UPF0229 family.

In Azotobacter vinelandii (strain DJ / ATCC BAA-1303), this protein is UPF0229 protein Avin_46880.